The chain runs to 634 residues: Chaperone protein HtpG (634 aa).

Positions 1–344 are a; substrate-binding; the sequence is MNETVANNKE…SNDLPLNVSR (344 aa). The interval 345–561 is b; it reads EILQDNKVTQ…DFEMGTQMAK (217 aa). The interval 562 to 634 is c; that stretch reads LLAAAGQAVP…TAINSLLTKG (73 aa).

The protein belongs to the heat shock protein 90 family. Homodimer.

It localises to the cytoplasm. Molecular chaperone. Has ATPase activity. In Vibrio vulnificus (strain CMCP6), this protein is Chaperone protein HtpG.